The following is a 977-amino-acid chain: MKKFFVTAAFPYVNGYLHLGHLVTYIKAEITARYKKMRGYDVLFPMGFHATGAPIYAAAYKVSIGDPKQIETLKKMGIKDIEKFKDPAYWVEYFSKAAKEDLSKLGFMIEWERSFTTVFNKPFHKFVEWQYHRLREKGYIYRGAHPIVWDPKVNMVIGDHDRPDDYAGIRPIEGVIIKFYSKDLDAYLPAFTLRPETVFGVVNIWVNPETEYVLAKVKKVFYVYELYSLYKKFGRLPLNIENRDKLEKLIQDYNNLLDRLKQYEKGIDLIAHAEEIAYKPKEEFVKELKEFAEKEGIKIEEKDIELLYEYYNTKVETQEEKWILPNTIVIEELKNQDFEIEIIGKIDKLIKTLAENPVTKELVPVLPAKFVDPEVGTGIVMSVPSHAPYDYVGLLDLIKTELKEFAEQALKNVRPVVKVEGFSEMPAKDIVESMNITSQEERDKLEKATQRLYSKEFYHGVLTEHAQQFQGLPVKEAKMKIAEYLMENGYGYIYYTLPVRFKSRYGNKVVVKLVKGQWFIKYSDKQWKELAHKAVENMKFYPPQVKELIKEKIDWYDDWAFTHQKELGTALPWDPKWVIESLSDSTIYTAYYTIAHILQHPEKYNIDWDKLTIDVFDYVFLGKGDPKEIAKKTGISEEILKEMRNQFEYWYPVDIRFSAQDLIANHLVFYIFHHVAIFPESKWPRGIAVSGFVTVNGEKMSKSKGNFITIREAIQRYGRDAVRLAAAYAGNAELVDQNIDLEFMEKAKNEIIPRIESYLDMEGYDRDENSLDKWIVNRIRLYFKKLEEYYENIRPRDVINEFFKLENDFNFYRALVLEKPHKRAIEYFKKAVKALWPIIPHVVREPAWIGKEEPDEPWIRVGQYVDQVIKDLANTLKLVRISMARNVSHRLADLVKLYYEGAKLTEEEKEEIREFIEWKPVRIKIIYKNPSEFDILRDIIPYIEKVFGGKVVLELASESKEEKAKRAKEFKPAFVIE.

The short motif at 11 to 21 (PYVNGYLHLGH) is the 'HIGH' region element. Positions 220-318 (VFYVYELYSL…EYYNTKVETQ (99 aa)) are insert. Residues 699-703 (KMSKS) carry the 'KMSKS' region motif. An ATP-binding site is contributed by K702.

It belongs to the class-I aminoacyl-tRNA synthetase family.

The protein localises to the cytoplasm. The catalysed reaction is tRNA(Leu) + L-leucine + ATP = L-leucyl-tRNA(Leu) + AMP + diphosphate. The protein is Leucine--tRNA ligase (leuS) of Nanoarchaeum equitans (strain Kin4-M).